A 177-amino-acid polypeptide reads, in one-letter code: uncharacterized protein (177 aa).

4 helical membrane passes run 4–24, 33–53, 80–100, and 115–135; these read IIIL…GFIL, ILSI…LHWI, IAFI…GSFL, and MLGA…LLYV.

It localises to the cell membrane. This is an uncharacterized protein from Bacillus subtilis (strain 168).